A 351-amino-acid chain; its full sequence is Anthranilate phosphoribosyltransferase (351 aa).

Residues Gly84, Gly87 to Asp88, Asn95 to Ser98, Lys113 to Ser121, and Ala125 each bind 5-phospho-alpha-D-ribose 1-diphosphate. Residue Gly84 participates in anthranilate binding. Ser97 contributes to the Mg(2+) binding site. Residue Asn116 participates in anthranilate binding. Position 171 (Arg171) interacts with anthranilate. Mg(2+) contacts are provided by Asp229 and Lys230.

It belongs to the anthranilate phosphoribosyltransferase family. As to quaternary structure, homodimer. It depends on Mg(2+) as a cofactor.

The catalysed reaction is N-(5-phospho-beta-D-ribosyl)anthranilate + diphosphate = 5-phospho-alpha-D-ribose 1-diphosphate + anthranilate. It participates in amino-acid biosynthesis; L-tryptophan biosynthesis; L-tryptophan from chorismate: step 2/5. In terms of biological role, catalyzes the transfer of the phosphoribosyl group of 5-phosphorylribose-1-pyrophosphate (PRPP) to anthranilate to yield N-(5'-phosphoribosyl)-anthranilate (PRA). This Clavibacter michiganensis subsp. michiganensis (strain NCPPB 382) protein is Anthranilate phosphoribosyltransferase.